The chain runs to 327 residues: Phenylalanine--tRNA ligase alpha subunit (327 aa).

Residue Glu252 coordinates Mg(2+).

This sequence belongs to the class-II aminoacyl-tRNA synthetase family. Phe-tRNA synthetase alpha subunit type 1 subfamily. As to quaternary structure, tetramer of two alpha and two beta subunits. Mg(2+) is required as a cofactor.

The protein resides in the cytoplasm. It catalyses the reaction tRNA(Phe) + L-phenylalanine + ATP = L-phenylalanyl-tRNA(Phe) + AMP + diphosphate + H(+). The sequence is that of Phenylalanine--tRNA ligase alpha subunit from Glaesserella parasuis serovar 5 (strain SH0165) (Haemophilus parasuis).